Here is a 509-residue protein sequence, read N- to C-terminus: Maturase K (509 aa).

It belongs to the intron maturase 2 family. MatK subfamily.

It is found in the plastid. Its subcellular location is the chloroplast. Its function is as follows. Usually encoded in the trnK tRNA gene intron. Probably assists in splicing its own and other chloroplast group II introns. This chain is Maturase K, found in Arpophyllum giganteum (Hyacinth orchid).